Consider the following 317-residue polypeptide: Transaldolase (317 aa).

Lys132 serves as the catalytic Schiff-base intermediate with substrate.

This sequence belongs to the transaldolase family. Type 1 subfamily. Homodimer.

It is found in the cytoplasm. It carries out the reaction D-sedoheptulose 7-phosphate + D-glyceraldehyde 3-phosphate = D-erythrose 4-phosphate + beta-D-fructose 6-phosphate. The protein operates within carbohydrate degradation; pentose phosphate pathway; D-glyceraldehyde 3-phosphate and beta-D-fructose 6-phosphate from D-ribose 5-phosphate and D-xylulose 5-phosphate (non-oxidative stage): step 2/3. Transaldolase is important for the balance of metabolites in the pentose-phosphate pathway. The polypeptide is Transaldolase (Yersinia pseudotuberculosis serotype O:1b (strain IP 31758)).